Reading from the N-terminus, the 419-residue chain is UDP-N-acetylglucosamine 1-carboxyvinyltransferase (419 aa).

22–23 (KN) is a phosphoenolpyruvate binding site. Position 91 (arginine 91) interacts with UDP-N-acetyl-alpha-D-glucosamine. The active-site Proton donor is the cysteine 115. Cysteine 115 carries the post-translational modification 2-(S-cysteinyl)pyruvic acid O-phosphothioketal. UDP-N-acetyl-alpha-D-glucosamine contacts are provided by residues 120-124 (RPVDL), 160-163 (KVSV), aspartate 305, and valine 327.

This sequence belongs to the EPSP synthase family. MurA subfamily.

It is found in the cytoplasm. It catalyses the reaction phosphoenolpyruvate + UDP-N-acetyl-alpha-D-glucosamine = UDP-N-acetyl-3-O-(1-carboxyvinyl)-alpha-D-glucosamine + phosphate. It participates in cell wall biogenesis; peptidoglycan biosynthesis. Its function is as follows. Cell wall formation. Adds enolpyruvyl to UDP-N-acetylglucosamine. This Salmonella gallinarum (strain 287/91 / NCTC 13346) protein is UDP-N-acetylglucosamine 1-carboxyvinyltransferase.